A 131-amino-acid chain; its full sequence is Large ribosomal subunit protein bL17 (131 aa).

It belongs to the bacterial ribosomal protein bL17 family. Part of the 50S ribosomal subunit. Contacts protein L32.

The polypeptide is Large ribosomal subunit protein bL17 (Burkholderia mallei (strain NCTC 10229)).